A 340-amino-acid polypeptide reads, in one-letter code: Biotin synthase (340 aa).

The Radical SAM core domain maps to 45–272 (NAVQVSTLLS…ASYVRLSAGR (228 aa)). [4Fe-4S] cluster-binding residues include C60, C64, and C67. Positions 104, 135, 195, and 267 each coordinate [2Fe-2S] cluster.

Belongs to the radical SAM superfamily. Biotin synthase family. Homodimer. The cofactor is [4Fe-4S] cluster. [2Fe-2S] cluster serves as cofactor.

It carries out the reaction (4R,5S)-dethiobiotin + (sulfur carrier)-SH + 2 reduced [2Fe-2S]-[ferredoxin] + 2 S-adenosyl-L-methionine = (sulfur carrier)-H + biotin + 2 5'-deoxyadenosine + 2 L-methionine + 2 oxidized [2Fe-2S]-[ferredoxin]. The protein operates within cofactor biosynthesis; biotin biosynthesis; biotin from 7,8-diaminononanoate: step 2/2. In terms of biological role, catalyzes the conversion of dethiobiotin (DTB) to biotin by the insertion of a sulfur atom into dethiobiotin via a radical-based mechanism. In Thioalkalivibrio sulfidiphilus (strain HL-EbGR7), this protein is Biotin synthase.